We begin with the raw amino-acid sequence, 462 residues long: L-seryl-tRNA(Sec) selenium transferase (462 aa).

At Lys-293 the chain carries N6-(pyridoxal phosphate)lysine.

This sequence belongs to the SelA family. Pyridoxal 5'-phosphate is required as a cofactor.

The protein resides in the cytoplasm. The enzyme catalyses L-seryl-tRNA(Sec) + selenophosphate + H(+) = L-selenocysteinyl-tRNA(Sec) + phosphate. It functions in the pathway aminoacyl-tRNA biosynthesis; selenocysteinyl-tRNA(Sec) biosynthesis; selenocysteinyl-tRNA(Sec) from L-seryl-tRNA(Sec) (bacterial route): step 1/1. Functionally, converts seryl-tRNA(Sec) to selenocysteinyl-tRNA(Sec) required for selenoprotein biosynthesis. The protein is L-seryl-tRNA(Sec) selenium transferase of Clostridium botulinum (strain Langeland / NCTC 10281 / Type F).